A 397-amino-acid chain; its full sequence is tRNA (guanine-N(7)-)-methyltransferase non-catalytic subunit wuho (397 aa).

WD repeat units follow at residues 75–115, 163–202, 206–244, and 303–343; these read KVEV…AQLL, GHLSIVYDVLWSEDQQYIITCDRDDKIRVTNYPATFDIHS, GHKEFVSGLAMLTEQHIISASGDKTLRVWNYTCGKELLL, and AGTW…RASG.

Belongs to the WD repeat TRM82 family. In terms of assembly, forms a heterodimer with the catalytic subunit Mettl1. Interacts with mei-P26 and weakly interacts with bgcn; required for the function or formation of the mei-P26-bgcn-bam-sxl complex. Interacts with nanos; may be involved in mei-P26-dependent derepression of the BMP signaling pathway. Interacts with Myc; the interaction may be mediated by mei-P26 and may be involved in the regulation of ribosome biogenesis. In testis, it is present at high level in hub cells, a niche for germline stem cells of testis. Ubiquitously expressed in all testicular cells throughout spermatogenesis. Ubiquitously expressed in all germline and somatic cells of the ovary.

Its subcellular location is the nucleus. The protein resides in the cytoplasm. The protein operates within tRNA modification; N(7)-methylguanine-tRNA biosynthesis. Required for the Mettl1-dependent formation of N(7)-methylguanine at position 46 (m7G46) in tRNA. In the Mettl1-wuho methyltransferase complex, it is required to stabilize and induce conformational changes of the catalytic subunit. Required for binding of nanos mRNA and repression of translation by the mei-P26-bgcn-bam-sxl complex. May cooperate with mei-P26 and nanos to derepress the BMP signaling pathway. May cooperate with mei-P26 to suppress expression of a subset of microRNAs. May cooperate with mei-P26 to regulate bam expression levels in germline cells during gametogenesis. Required to promote mitosis to meiosis transition during gametogenesis. May regulate germline cell division in part by regulating ribosome biogenesis. The protein is tRNA (guanine-N(7)-)-methyltransferase non-catalytic subunit wuho of Drosophila persimilis (Fruit fly).